The chain runs to 215 residues: LysM and putative peptidoglycan-binding domain-containing protein 2 (215 aa).

Positions 1–40 (MADSSPAPSLRAGGPREPRPSAPSPPPPHSRLGSEAEEAE) are disordered. An N-acetylalanine modification is found at alanine 2. 4 positions are modified to phosphoserine: serine 5, serine 24, serine 34, and serine 58. A compositionally biased stretch (pro residues) spans 20–29 (PSAPSPPPPH). Positions 72 to 116 (VEHRVRAGDTLQGIALKYGVSMEQIKRANKLFTNDCIFLKKTLNI) constitute a LysM domain. The disordered stretch occupies residues 194 to 215 (AKKLKGESRDEEGLYTASLYHS).

This Bos taurus (Bovine) protein is LysM and putative peptidoglycan-binding domain-containing protein 2 (LYSMD2).